Reading from the N-terminus, the 404-residue chain is Glycosylated lysosomal membrane protein (404 aa).

The N-terminal stretch at 1 to 35 is a signal peptide; sequence MRGSVERGWGWGHCASSPLLLWTLLLFAAPFGLLG. At 36-371 the chain is on the lumenal side; it reads EKTRQLSLEV…GRLVPTSPGH (336 aa). N65, N134, N159, N186, and N229 each carry an N-linked (GlcNAc...) asparagine glycan. A helical transmembrane segment spans residues 372-392; it reads HGSALGAPGLMLLGGGLVLLL. Topologically, residues 393–404 are cytoplasmic; that stretch reads HHRKYSEYQSIN. Positions 400–404 match the Lysosomal targeting motif motif; the sequence is YQSIN.

It belongs to the GLMP family. In terms of assembly, interacts (via lumenal domain) with lysosomal protein MFSD1; the interaction starts while both proteins are still in the endoplasmic reticulum and is required for stabilization of MFSD1 in lysosomes but has no direct effect on its targeting to lysosomes or transporter activity. In terms of processing, highly N-glycosylated. N-glycosylation is essential for GLMP stability and for MFSD1 lysosomal localization.

The protein resides in the lysosome membrane. Functionally, required to protect lysosomal transporter MFSD1 from lysosomal proteolysis and for MFSD1 lysosomal localization. This Pongo abelii (Sumatran orangutan) protein is Glycosylated lysosomal membrane protein.